Reading from the N-terminus, the 740-residue chain is Catalase-peroxidase (740 aa).

Residues 1–27 form the signal peptide; sequence MFKSTLPIAAAISVALTSMVLPAKALA. A cross-link (tryptophyl-tyrosyl-methioninium (Trp-Tyr) (with M-254)) is located at residues 106–228; that stretch reads WHSAGVYRVH…LAAVEMGLIY (123 aa). Catalysis depends on H107, which acts as the Proton acceptor. The tryptophyl-tyrosyl-methioninium (Tyr-Met) (with W-106) cross-link spans 228 to 254; it reads YVNPEGPHGKPDPLLAANDIRMSFGRM. H269 contributes to the heme b binding site.

The protein belongs to the peroxidase family. Peroxidase/catalase subfamily. In terms of assembly, homodimer or homotetramer. It depends on heme b as a cofactor. Post-translationally, formation of the three residue Trp-Tyr-Met cross-link is important for the catalase, but not the peroxidase activity of the enzyme.

It catalyses the reaction H2O2 + AH2 = A + 2 H2O. The catalysed reaction is 2 H2O2 = O2 + 2 H2O. Its function is as follows. Bifunctional enzyme with both catalase and broad-spectrum peroxidase activity. The chain is Catalase-peroxidase from Colwellia psychrerythraea (strain 34H / ATCC BAA-681) (Vibrio psychroerythus).